We begin with the raw amino-acid sequence, 190 residues long: 3-isopropylmalate dehydratase small subunit (190 aa).

The protein belongs to the LeuD family. LeuD type 1 subfamily. In terms of assembly, heterodimer of LeuC and LeuD.

It carries out the reaction (2R,3S)-3-isopropylmalate = (2S)-2-isopropylmalate. It functions in the pathway amino-acid biosynthesis; L-leucine biosynthesis; L-leucine from 3-methyl-2-oxobutanoate: step 2/4. Functionally, catalyzes the isomerization between 2-isopropylmalate and 3-isopropylmalate, via the formation of 2-isopropylmaleate. The polypeptide is 3-isopropylmalate dehydratase small subunit (Staphylococcus aureus (strain MRSA252)).